Here is a 999-residue protein sequence, read N- to C-terminus: Protein Smaug (999 aa).

Positions Met-1 to Pro-36 are enriched in polar residues. 2 disordered regions span residues Met-1–Pro-69 and Leu-329–Pro-349. Composition is skewed to low complexity over residues Thr-44–Pro-69 and Leu-329–Ser-338. Residues Ser-564 and Ser-575 each carry the phosphoserine modification. The interval Glu-583–Met-763 is interaction with cup. An SAM domain is found at Gly-600–Lys-654. 2 disordered regions span residues His-773 to Met-892 and Gln-955 to Pro-977. Composition is skewed to polar residues over residues Lys-801 to Leu-822 and His-854 to Pro-864. Ser-972 carries the phosphoserine modification.

The protein belongs to the SMAUG family. As to quaternary structure, interacts with oskar (osk). Binds to the 3'-UTR of nanos (nos). Interacts with cup, which in turn recruits eIF4-E, leading to an indirect interaction between smg and eIF4-E that prevents mRNA translation. Forms a complex with aub, twin, AGO3, nanos mRNA and piRNAs that targets the nanos 3'-untranslated region, in early embryos. As to expression, at syncytial blastoderm, it is located throughout the bulk cytoplasm and pole plasm. By the time of cellularization, it concentrates at the posterior pole.

The protein resides in the cytoplasm. Its function is as follows. Translation regulator that binds to the 3'-UTR of specific mRNAs such as nanos (nos) and prevents their translation. Prevents translation of unlocalized nanos in the bulk cytoplasm via the recruitment of cup. The polypeptide is Protein Smaug (smg) (Drosophila melanogaster (Fruit fly)).